A 436-amino-acid chain; its full sequence is GTPase Der (436 aa).

EngA-type G domains are found at residues 4 to 167 and 175 to 351; these read PTIA…PNEY and IKFS…ESQN. GTP-binding positions include 10–17, 57–61, 119–122, 181–188, 229–233, and 294–297; these read GRPNVGKS, DTGGI, NKVD, DTAGM, and NKWD. Positions 352-436 constitute a KH-like domain; it reads TRIPSAVLND…PIHLIARKRK (85 aa).

The protein belongs to the TRAFAC class TrmE-Era-EngA-EngB-Septin-like GTPase superfamily. EngA (Der) GTPase family. In terms of assembly, associates with the 50S ribosomal subunit.

Its function is as follows. GTPase that plays an essential role in the late steps of ribosome biogenesis. In Streptococcus pneumoniae (strain JJA), this protein is GTPase Der.